Consider the following 229-residue polypeptide: Large ribosomal subunit protein uL1 (229 aa).

The protein belongs to the universal ribosomal protein uL1 family. In terms of assembly, part of the 50S ribosomal subunit.

Binds directly to 23S rRNA. The L1 stalk is quite mobile in the ribosome, and is involved in E site tRNA release. In terms of biological role, protein L1 is also a translational repressor protein, it controls the translation of the L11 operon by binding to its mRNA. The chain is Large ribosomal subunit protein uL1 from Listeria innocua serovar 6a (strain ATCC BAA-680 / CLIP 11262).